A 228-amino-acid polypeptide reads, in one-letter code: MTKRYFVTGTDTEVGKTVASCALLQAATQLGYQTVGYKPVASGSEMTTDGLRNSDALALQRNSSLPQPYSAINPYTFAEPTSPHIASADEGRAIDAAVLSRGLRTLEAQADWVLTEGAGGWFTPLSATLTFADWVQTEQLPVILVVGVKLGCINHAMLTALAVEQAGLPLVGWIANDMQPPGARHGEYLATLRRVIPAPLLGEIPWLGVSPSQAATGQYLDLSPLERA.

Residue Glu-13–Val-18 participates in ATP binding. Mg(2+) is bound at residue Thr-17. The active site involves Lys-38. Residue Ser-42 participates in substrate binding. ATP-binding positions include Asp-55, Glu-116 to Gly-119, Asn-176 to Asp-177, and Pro-205 to Leu-207. Mg(2+) contacts are provided by Asp-55 and Glu-116.

It belongs to the dethiobiotin synthetase family. In terms of assembly, homodimer. Mg(2+) is required as a cofactor.

It is found in the cytoplasm. It carries out the reaction (7R,8S)-7,8-diammoniononanoate + CO2 + ATP = (4R,5S)-dethiobiotin + ADP + phosphate + 3 H(+). It functions in the pathway cofactor biosynthesis; biotin biosynthesis; biotin from 7,8-diaminononanoate: step 1/2. In terms of biological role, catalyzes a mechanistically unusual reaction, the ATP-dependent insertion of CO2 between the N7 and N8 nitrogen atoms of 7,8-diaminopelargonic acid (DAPA, also called 7,8-diammoniononanoate) to form a ureido ring. The protein is ATP-dependent dethiobiotin synthetase BioD 1 of Salmonella typhi.